The following is a 140-amino-acid chain: MVSKQSKQAGRLPKRKEEFTYRGLTIAEMKKLDMNQVAALLPARQRRKIKREFGEEHQKLLNAVKAGETKIKTHLRDMIILPEMVGVTFEIHNGKEWKAVETTPEMVGHYLGEFALTRHSVSHGSAGIGATRGSKYVPLK.

This sequence belongs to the universal ribosomal protein uS19 family.

In terms of biological role, protein S19 forms a complex with S13 that binds strongly to the 16S ribosomal RNA. The protein is Small ribosomal subunit protein uS19 of Methanocella arvoryzae (strain DSM 22066 / NBRC 105507 / MRE50).